Here is a 596-residue protein sequence, read N- to C-terminus: Aspartate--tRNA(Asp/Asn) ligase (596 aa).

An L-aspartate-binding site is contributed by E172. Residues 196–199 (QLFK) form an aspartate region. R218 is an L-aspartate binding site. Residues 218 to 220 (RDE) and Q227 each bind ATP. Residue H455 participates in L-aspartate binding. E489 contributes to the ATP binding site. R496 contributes to the L-aspartate binding site. Residue 541 to 544 (GLDR) participates in ATP binding.

This sequence belongs to the class-II aminoacyl-tRNA synthetase family. Type 1 subfamily. As to quaternary structure, homodimer.

It localises to the cytoplasm. It carries out the reaction tRNA(Asx) + L-aspartate + ATP = L-aspartyl-tRNA(Asx) + AMP + diphosphate. Aspartyl-tRNA synthetase with relaxed tRNA specificity since it is able to aspartylate not only its cognate tRNA(Asp) but also tRNA(Asn). Reaction proceeds in two steps: L-aspartate is first activated by ATP to form Asp-AMP and then transferred to the acceptor end of tRNA(Asp/Asn). This chain is Aspartate--tRNA(Asp/Asn) ligase, found in Bordetella avium (strain 197N).